Reading from the N-terminus, the 429-residue chain is Adenylosuccinate synthetase (429 aa).

GTP is bound by residues 12-18 (GDEGKGK) and 40-42 (GHT). Aspartate 13 (proton acceptor) is an active-site residue. 2 residues coordinate Mg(2+): aspartate 13 and glycine 40. IMP contacts are provided by residues 13 to 16 (DEGK), 38 to 41 (NAGH), threonine 129, arginine 143, glutamine 223, threonine 238, and arginine 302. Histidine 41 serves as the catalytic Proton donor. 298–304 (TVTGRQR) contacts substrate. Residues arginine 304, 330-332 (KID), and 412-414 (STS) each bind GTP.

The protein belongs to the adenylosuccinate synthetase family. In terms of assembly, homodimer. The cofactor is Mg(2+).

The protein resides in the cytoplasm. The catalysed reaction is IMP + L-aspartate + GTP = N(6)-(1,2-dicarboxyethyl)-AMP + GDP + phosphate + 2 H(+). It participates in purine metabolism; AMP biosynthesis via de novo pathway; AMP from IMP: step 1/2. Its function is as follows. Plays an important role in the de novo pathway of purine nucleotide biosynthesis. Catalyzes the first committed step in the biosynthesis of AMP from IMP. This chain is Adenylosuccinate synthetase, found in Erythrobacter litoralis (strain HTCC2594).